Here is a 41-residue protein sequence, read N- to C-terminus: Pi-stichotoxin-Hcr5b (41 aa).

3 cysteine pairs are disulfide-bonded: C4/C37, C6/C30, and C20/C38.

The protein belongs to the sea anemone type 3 (BDS) potassium channel toxin family.

The protein localises to the secreted. The protein resides in the nematocyst. Functionally, remarkably non-selective toxin, with activity on many different ion channels. Weakly and reversibly inhibits rat and human homomeric ASIC1 (isoform ASIC1a) (IC(50)=4.8 uM, and IC(50)=14.6 uM), and ASIC3 (IC(50)=15.9 uM). Molecular modeling interaction with ASIC1a suggests that this peptide hinders the collapse of acidic pockets and stabilizes nonconducting channels state. It activates several potassium channels including Kv1.1/KCNA1, Kv1.2/KCNA2, and drosophila Shaker IR. It moderately to potently inhibits potassium channels including Kv1.3/KCNA3, Kv1.4/KCNA4, Kv1.5/KCNA5, Kv1.6/KCNA6, Kv2.1/KCNB1, Kv4.2/KCND2, Kv7.1/KCNQ1, Kv7.2/Kv7.3 (KCNQ2/KCNQ3), Kv7.4/KCNQ4, hERG/KCNH2, and C.elegans QKT1. On sodium channels, it moderately to potently inhibits Nav1.1/SCN1A, Nav1.2/SCN2A, Nav1.3/SCN3A, Nav1.4/SCN4A, Nav1.5/SCN5A, Nav1.6/SCN8A, Nav1.7/SCN9A, Nav1.8/SCN10A, and B.germanica BgNav. It also moderately to potently inhibits Cav3.1/CACNA1G, Cav3.2/CACNA1H, and Cav3.3/CACNA1I. Significant shifts in the voltage-current relationship are observed on Kv and Nav, depending on the channel isoform, whereas the toxin does not seem to modulate the voltage-sensor domains of Cav channels, acting mainly as a pore blocker. Does not activate nicotinic acetylcholine receptors (nAChR), but potentiates ACh-elicited current of human alpha-7/CHRNA7 nAChR. Is also able to bind T.californica muscle-type nAChRs. In vivo, causes an excitatory effect in mice behavior. Also shows antihyperalgesic and analgesic activity in the acid-induced muscle pain mice model, and weak anti-inflammatory effect in models of acute local inflammation. The sequence is that of Pi-stichotoxin-Hcr5b from Radianthus crispa (Leathery sea anemone).